We begin with the raw amino-acid sequence, 144 residues long: Putative pre-16S rRNA nuclease (144 aa).

This sequence belongs to the YqgF nuclease family.

Its subcellular location is the cytoplasm. Could be a nuclease involved in processing of the 5'-end of pre-16S rRNA. In Picosynechococcus sp. (strain ATCC 27264 / PCC 7002 / PR-6) (Agmenellum quadruplicatum), this protein is Putative pre-16S rRNA nuclease.